A 256-amino-acid chain; its full sequence is RNA polymerase sigma factor SigI1 (256 aa).

Residues 67–80 (DEFSIALSAFNEAI) carry the Polymerase core binding motif. Positions 205-224 (RNELKKKAKVHGRTIGNNRK) form a DNA-binding region, H-T-H motif.

This sequence belongs to the sigma-70 factor family. SigI subfamily. As to quaternary structure, interacts with RsgI1.

The protein localises to the cytoplasm. With respect to regulation, negatively regulated by the anti-sigma-I factor RsgI1. Binding of the polysaccharide substrate to RsgI1 may lead to the release and activation of SigI1. Sigma factors are initiation factors that promote the attachment of RNA polymerase to specific initiation sites and are then released. This sigma factor is involved in regulation of cellulosomal genes via an external polysaccharide-sensing mechanism. SigI1 promotes transcription from sigI1 and celS promoters. The polypeptide is RNA polymerase sigma factor SigI1 (Acetivibrio thermocellus (strain ATCC 27405 / DSM 1237 / JCM 9322 / NBRC 103400 / NCIMB 10682 / NRRL B-4536 / VPI 7372) (Clostridium thermocellum)).